A 352-amino-acid polypeptide reads, in one-letter code: UDP-N-acetylglucosamine--N-acetylmuramyl-(pentapeptide) pyrophosphoryl-undecaprenol N-acetylglucosamine transferase (352 aa).

Residues Ser195 and Gln287 each coordinate UDP-N-acetyl-alpha-D-glucosamine.

It belongs to the glycosyltransferase 28 family. MurG subfamily.

The protein resides in the cell membrane. It catalyses the reaction Mur2Ac(oyl-L-Ala-gamma-D-Glu-L-Lys-D-Ala-D-Ala)-di-trans,octa-cis-undecaprenyl diphosphate + UDP-N-acetyl-alpha-D-glucosamine = beta-D-GlcNAc-(1-&gt;4)-Mur2Ac(oyl-L-Ala-gamma-D-Glu-L-Lys-D-Ala-D-Ala)-di-trans,octa-cis-undecaprenyl diphosphate + UDP + H(+). It participates in cell wall biogenesis; peptidoglycan biosynthesis. Cell wall formation. Catalyzes the transfer of a GlcNAc subunit on undecaprenyl-pyrophosphoryl-MurNAc-pentapeptide (lipid intermediate I) to form undecaprenyl-pyrophosphoryl-MurNAc-(pentapeptide)GlcNAc (lipid intermediate II). In Streptococcus pneumoniae (strain 70585), this protein is UDP-N-acetylglucosamine--N-acetylmuramyl-(pentapeptide) pyrophosphoryl-undecaprenol N-acetylglucosamine transferase.